The sequence spans 180 residues: ATP synthase subunit delta, chloroplastic (180 aa).

It belongs to the ATPase delta chain family. F-type ATPases have 2 components, F(1) - the catalytic core - and F(0) - the membrane proton channel. F(1) has five subunits: alpha(3), beta(3), gamma(1), delta(1), epsilon(1). CF(0) has four main subunits: a(1), b(1), b'(1) and c(10-14). The alpha and beta chains form an alternating ring which encloses part of the gamma chain. F(1) is attached to F(0) by a central stalk formed by the gamma and epsilon chains, while a peripheral stalk is formed by the delta, b and b' chains.

It localises to the plastid. Its subcellular location is the chloroplast thylakoid membrane. Its function is as follows. F(1)F(0) ATP synthase produces ATP from ADP in the presence of a proton or sodium gradient. F-type ATPases consist of two structural domains, F(1) containing the extramembraneous catalytic core and F(0) containing the membrane proton channel, linked together by a central stalk and a peripheral stalk. During catalysis, ATP synthesis in the catalytic domain of F(1) is coupled via a rotary mechanism of the central stalk subunits to proton translocation. In terms of biological role, this protein is part of the stalk that links CF(0) to CF(1). It either transmits conformational changes from CF(0) to CF(1) or is implicated in proton conduction. The sequence is that of ATP synthase subunit delta, chloroplastic from Rhodomonas salina (Cryptomonas salina).